The chain runs to 512 residues: Methionine--tRNA ligase (512 aa).

Residues 11–21 (YYASGKPHIGH) carry the 'HIGH' region motif. Zn(2+) contacts are provided by Cys126, Cys129, Cys143, and His147. The 'KMSKS' region signature appears at 301–305 (KMSKS). Lys304 is an ATP binding site.

It belongs to the class-I aminoacyl-tRNA synthetase family. MetG type 2A subfamily. Monomer. Requires Zn(2+) as cofactor.

The protein resides in the cytoplasm. The enzyme catalyses tRNA(Met) + L-methionine + ATP = L-methionyl-tRNA(Met) + AMP + diphosphate. In terms of biological role, is required not only for elongation of protein synthesis but also for the initiation of all mRNA translation through initiator tRNA(fMet) aminoacylation. The polypeptide is Methionine--tRNA ligase (metG) (Mycoplasma genitalium (strain ATCC 33530 / DSM 19775 / NCTC 10195 / G37) (Mycoplasmoides genitalium)).